The following is a 2531-amino-acid chain: Neurogenic locus notch homolog protein 1 (2531 aa).

The first 18 residues, 1-18 (MPRLLTPLLCLTLLPALA), serve as a signal peptide directing secretion. Residues 19–1725 (ARGLRCSQPS…VEPPLPSQLH (1707 aa)) lie on the Extracellular side of the membrane. EGF-like domains are found at residues 20-58 (RGLR…QRCQ), 59-99 (DSNP…PLCL), 102-139 (LDNA…KSCQ), and 140-176 (QADP…PTCR). 32 disulfides stabilise this stretch: cysteine 24-cysteine 37, cysteine 31-cysteine 46, cysteine 63-cysteine 74, cysteine 68-cysteine 87, cysteine 89-cysteine 98, cysteine 106-cysteine 117, cysteine 111-cysteine 127, cysteine 129-cysteine 138, cysteine 144-cysteine 155, cysteine 149-cysteine 164, cysteine 166-cysteine 175, cysteine 182-cysteine 195, cysteine 189-cysteine 204, cysteine 206-cysteine 215, cysteine 222-cysteine 233, cysteine 227-cysteine 243, cysteine 245-cysteine 254, cysteine 261-cysteine 272, cysteine 266-cysteine 281, cysteine 283-cysteine 292, cysteine 299-cysteine 312, cysteine 306-cysteine 321, cysteine 323-cysteine 332, cysteine 339-cysteine 350, cysteine 344-cysteine 359, cysteine 361-cysteine 370, cysteine 376-cysteine 387, cysteine 381-cysteine 398, cysteine 400-cysteine 409, cysteine 416-cysteine 429, cysteine 423-cysteine 438, and cysteine 440-cysteine 449. Residue serine 65 is glycosylated (O-linked (Glc...) serine). Residue threonine 73 is glycosylated (O-linked (Fuc...) threonine). Threonine 116 carries O-linked (Fuc...) threonine glycosylation. Serine 146 carries O-linked (Glc...) serine glycosylation. Positions 178–216 (DVNECSQNPGLCRHGGTCHNEIGSYRCACRATHTGPHCE) constitute an EGF-like 5; calcium-binding domain. Threonine 194 carries O-linked (Fuc...) threonine glycosylation. The EGF-like 6 domain occupies 218-255 (PYVPCSPSPCQNGGTCRPTGDTTHECACLPGFAGQNCE). Threonine 232 carries O-linked (Fuc...) threonine; alternate glycosylation. Threonine 232 carries O-linked (GalNAc...) threonine; alternate glycosylation. An EGF-like 7; calcium-binding domain is found at 257-293 (NVDDCPGNNCKNGGACVDGVNTYNCRCPPEWTGQYCT). One can recognise an EGF-like 8; calcium-binding domain in the interval 295-333 (DVDECQLMPNACQNGGTCHNTHGGYNCVCVNGWTGEDCS). O-linked (Fuc...) threonine glycosylation is present at threonine 311. One can recognise an EGF-like 9; calcium-binding domain in the interval 335–371 (NIDDCASAACFQGATCHDRVASFYCECPHGRTGLLCH). O-linked (Glc...) serine glycosylation is present at serine 341. The O-linked (Fuc...) threonine glycan is linked to threonine 349. Residues 372–410 (LNDACISNPCNEGSNCDTNPVNGKAICTCPSGYTGPACS) enclose the EGF-like 10; calcium-binding domain. Residue serine 378 is glycosylated (O-linked (Glc...) serine). One can recognise an EGF-like 11; calcium-binding domain in the interval 412–450 (DVDECALGANPCEHAGKCLNTLGSFECQCLQGYTGPRCE). The segment at 420–421 (AN) is interaction with DLL4. The Ca(2+) site is built by threonine 432 and serine 435. An O-linked (Glc...) serine glycan is attached at serine 435. Residues 448-452 (RCEID) form an interaction with DLL4 region. Residues aspartate 452, valine 453, and glutamate 455 each contribute to the Ca(2+) site. The 37-residue stretch at 452–488 (DVNECISNPCQNDATCLDQIGEFQCICMPGYEGVYCE) folds into the EGF-like 12; calcium-binding domain. Disulfide bonds link cysteine 456–cysteine 467, cysteine 461–cysteine 476, and cysteine 478–cysteine 487. O-linked (Glc...) serine glycosylation occurs at serine 458. O-linked (Fuc...) threonine glycosylation occurs at threonine 466. Residues aspartate 469 and glutamine 470 each contribute to the Ca(2+) site. Ca(2+) is bound by residues asparagine 490, threonine 491, and glutamate 493. The EGF-like 13; calcium-binding domain maps to 490–526 (NTDECASSPCLHNGHCMDKINEFQCQCPKGFNGHLCQ). Cystine bridges form between cysteine 494-cysteine 505, cysteine 499-cysteine 514, cysteine 516-cysteine 525, cysteine 532-cysteine 543, cysteine 537-cysteine 552, cysteine 554-cysteine 563, cysteine 570-cysteine 580, cysteine 575-cysteine 589, cysteine 591-cysteine 600, cysteine 607-cysteine 618, cysteine 612-cysteine 627, cysteine 629-cysteine 638, cysteine 645-cysteine 655, cysteine 650-cysteine 664, cysteine 666-cysteine 675, cysteine 682-cysteine 693, cysteine 687-cysteine 702, cysteine 704-cysteine 713, cysteine 720-cysteine 730, cysteine 725-cysteine 739, cysteine 741-cysteine 750, cysteine 757-cysteine 768, cysteine 762-cysteine 777, cysteine 779-cysteine 788, cysteine 795-cysteine 806, cysteine 800-cysteine 815, cysteine 817-cysteine 826, cysteine 833-cysteine 844, cysteine 838-cysteine 855, cysteine 857-cysteine 866, cysteine 873-cysteine 884, cysteine 878-cysteine 893, cysteine 895-cysteine 904, cysteine 911-cysteine 922, cysteine 916-cysteine 931, cysteine 933-cysteine 942, cysteine 949-cysteine 960, cysteine 954-cysteine 969, cysteine 971-cysteine 980, cysteine 987-cysteine 998, cysteine 992-cysteine 1007, cysteine 1009-cysteine 1018, cysteine 1025-cysteine 1036, cysteine 1030-cysteine 1045, cysteine 1047-cysteine 1056, cysteine 1063-cysteine 1074, cysteine 1068-cysteine 1083, cysteine 1085-cysteine 1094, cysteine 1101-cysteine 1122, cysteine 1116-cysteine 1131, cysteine 1133-cysteine 1142, cysteine 1149-cysteine 1160, cysteine 1154-cysteine 1169, cysteine 1171-cysteine 1180, cysteine 1187-cysteine 1198, cysteine 1192-cysteine 1207, cysteine 1209-cysteine 1218, cysteine 1225-cysteine 1244, cysteine 1238-cysteine 1253, cysteine 1255-cysteine 1264, cysteine 1271-cysteine 1284, cysteine 1276-cysteine 1293, cysteine 1295-cysteine 1304, cysteine 1311-cysteine 1322, cysteine 1316-cysteine 1334, cysteine 1336-cysteine 1345, cysteine 1352-cysteine 1363, cysteine 1357-cysteine 1372, cysteine 1374-cysteine 1383, cysteine 1391-cysteine 1403, cysteine 1397-cysteine 1414, cysteine 1416-cysteine 1425, cysteine 1449-cysteine 1472, cysteine 1454-cysteine 1467, and cysteine 1463-cysteine 1479. Serine 496 is a glycosylation site (O-linked (Glc...) serine). The Ca(2+) site is built by aspartate 507 and lysine 508. One can recognise an EGF-like 14; calcium-binding domain in the interval 528 to 564 (DVDECASTPCKNGAKCLDGPNTYTCVCTEGYTGTHCE). Serine 534 carries an O-linked (Glc...) serine glycan. In terms of domain architecture, EGF-like 15; calcium-binding spans 566–601 (DIDECDPDPCHYGSCKDGVATFTCLCQPGYTGHHCE). Positions 603–639 (NINECHSQPCRHGGTCQDRDNSYLCLCLKGTTGPNCE) constitute an EGF-like 16; calcium-binding domain. Serine 609 carries O-linked (Glc...) serine glycosylation. A glycan (O-linked (Fuc...) threonine) is linked at threonine 617. The region spanning 641 to 676 (NLDDCASNPCDSGTCLDKIDGYECACEPGYTGSMCN) is the EGF-like 17; calcium-binding domain. O-linked (Glc...) serine glycosylation is present at serine 647. Positions 678-714 (NIDECAGSPCHNGGTCEDGIAGFTCRCPEGYHDPTCL) constitute an EGF-like 18; calcium-binding domain. An O-linked (Fuc...) threonine glycan is attached at threonine 692. The EGF-like 19; calcium-binding domain maps to 716 to 751 (EVNECNSNPCIHGACRDGLNGYKCDCAPGWSGTNCD). Residue serine 722 is glycosylated (O-linked (Glc...) serine). The 37-residue stretch at 753–789 (NNNECESNPCVNGGTCKDMTSGYVCTCREGFSGPNCQ) folds into the EGF-like 20; calcium-binding domain. Serine 759 carries O-linked (Glc...) serine glycosylation. Threonine 767 carries O-linked (Fuc...) threonine glycosylation. O-linked (GlcNAc) serine glycosylation occurs at serine 784. One can recognise an EGF-like 21; calcium-binding domain in the interval 791-827 (NINECASNPCLNQGTCIDDVAGYKCNCPLPYTGATCE). Serine 797 carries an O-linked (Glc...) serine glycan. A glycan (O-linked (Fuc...) threonine) is linked at threonine 805. One can recognise an EGF-like 22 domain in the interval 829–867 (VLAPCATSPCKNSGVCKESEDYESFSCVCPTGWQGQTCE). An EGF-like 23; calcium-binding domain is found at 869–905 (DINECVKSPCRHGASCQNTNGSYRCLCQAGYTGRNCE). Asparagine 888 carries an N-linked (GlcNAc...) asparagine glycan. O-linked (GlcNAc) threonine glycosylation occurs at threonine 900. In terms of domain architecture, EGF-like 24 spans 907 to 943 (DIDDCRPNPCHNGGSCTDGINTAFCDCLPGFQGAFCE). Serine 921 carries O-linked (Fuc) serine glycosylation. An EGF-like 25; calcium-binding domain is found at 945–981 (DINECASNPCQNGANCTDCVDSYTCTCPVGFNGIHCE). The O-linked (Glc...) serine glycan is linked to serine 951. A glycan (N-linked (GlcNAc...) asparagine) is linked at asparagine 959. Positions 983 to 1019 (NTPDCTESSCFNGGTCVDGINSFTCLCPPGFTGSYCQ) constitute an EGF-like 26 domain. Threonine 997 is a glycosylation site (O-linked (Fuc...) threonine). In terms of domain architecture, EGF-like 27; calcium-binding spans 1021–1057 (DVNECDSRPCLHGGTCQDSYGTYKCTCPQGYTGLNCQ). Serine 1027 is a glycosylation site (O-linked (Glc...) serine). O-linked (Fuc...) threonine glycosylation is present at threonine 1035. EGF-like domains are found at residues 1059–1095 (LVRW…VNCD) and 1097–1143 (LSVS…SYCE). An O-linked (Glc...) serine glycan is attached at serine 1065. The region spanning 1145–1181 (EVDECSPNPCQNGATCTDYLGGFSCKCVAGYHGSNCS) is the EGF-like 30; calcium-binding domain. The O-linked (Fuc...) threonine glycan is linked to threonine 1159. Asparagine 1179 carries N-linked (GlcNAc...) asparagine glycosylation. Positions 1183 to 1219 (EINECLSQPCQNGGTCIDLTNSYKCSCPRGTQGVHCE) constitute an EGF-like 31; calcium-binding domain. The O-linked (Glc...) serine glycan is linked to serine 1189. O-linked (Fuc...) threonine glycosylation is present at threonine 1197. An EGF-like 32; calcium-binding domain is found at 1221-1265 (NVDDCHPPLDPASRSPKCFNNGTCVDQVGGYTCTCPPGFVGERCE). Asparagine 1241 carries an N-linked (GlcNAc...) asparagine glycan. 4 consecutive EGF-like domains span residues 1267 to 1305 (DVNE…RRCE), 1307 to 1346 (VING…ATCE), 1348 to 1384 (DART…PECQ), and 1387 to 1426 (ASSP…LLCH). O-linked (Glc...) serine glycosylation is present at serine 1273. Threonine 1362 carries an O-linked (Fuc...) threonine glycan. The O-linked (GlcNAc...) threonine glycan is linked to threonine 1379. Threonine 1402 carries O-linked (Fuc...) threonine; alternate glycosylation. Threonine 1402 is a glycosylation site (O-linked (GalNAc...) threonine; alternate). LNR repeat units lie at residues 1449 to 1489 (CELP…PWKN), 1490 to 1531 (CTQS…CNPL), and 1532 to 1571 (YDQY…RLAA). Positions 1457, 1460, 1475, and 1478 each coordinate Ca(2+). A glycan (N-linked (GlcNAc...) asparagine) is linked at asparagine 1489. Intrachain disulfides connect cysteine 1490/cysteine 1514, cysteine 1496/cysteine 1509, cysteine 1505/cysteine 1521, cysteine 1536/cysteine 1549, and cysteine 1545/cysteine 1561. N-linked (GlcNAc...) asparagine glycosylation occurs at asparagine 1587. The tract at residues 1718 to 1750 (PPLPSQLHLMYVAAAAFVLLFFVGCGVLLSRKR) is interaction with PSEN1. Residues 1726–1746 (LMYVAAAAFVLLFFVGCGVLL) form a helical membrane-spanning segment. Over 1747 to 2531 (SRKRRRQHGQ…QITHIPEAFK (785 aa)) the chain is Cytoplasmic. Lysine 1749 participates in a covalent cross-link: Glycyl lysine isopeptide (Lys-Gly) (interchain with G-Cter in ubiquitin). Positions 1770–1798 (KKKRREPLGEDSVGLKPLKNASDGALMDD) are disordered. Threonine 1851 bears the Phosphothreonine mark. ANK repeat units lie at residues 1917–1946 (TGET…DANI), 1950–1980 (MGRT…DLDA), 1984–2013 (DGTT…DVNA), 2017–2046 (LGKS…NKDM), and 2050–2079 (KEET…NRDI). Residues 1937–1945 (LLEASADAN) are HIF1AN-binding. Asparagine 1945 bears the (3S)-3-hydroxyasparagine; by HIF1AN; partial mark. The interval 2004–2012 (LINSHADVN) is HIF1AN-binding. Asparagine 2012 bears the (3S)-3-hydroxyasparagine; by HIF1AN; partial mark. 3 disordered regions span residues 2140–2185 (KSAT…DSSS), 2382–2428 (QPQN…SLPV), and 2440–2531 (PTSL…EAFK). Positions 2382 to 2395 (QPQNLQPPSQPHLS) are enriched in low complexity. The segment covering 2440 to 2478 (PTSLPSSMVPPMTTTQFLTPPSQHSYSSSPVDNTPSHQL) has biased composition (polar residues). Low complexity predominate over residues 2488-2503 (PSPESPDQWSSSSPHS). Residues 2504 to 2524 (NISDWSEGISSPPTTMPSQIT) show a composition bias toward polar residues.

The protein belongs to the NOTCH family. Heterodimer of a C-terminal fragment N(TM) and an N-terminal fragment N(EC) which are probably linked by disulfide bonds. Interacts with DNER, DTX1, DTX2 and RBPJ/RBPSUH. Also interacts with MAML1, MAML2 and MAML3 which act as transcriptional coactivators for NOTCH1. Notch 1 intracellular domain interacts with SNW1; the interaction involves multimerized NOTCH1 NICD and is implicated in a formation of an intermediate preactivation complex which associates with DNA-bound CBF-1/RBPJ. The activated membrane-bound form interacts with AAK1 which promotes NOTCH1 stabilization. Forms a trimeric complex with FBXW7 and SGK1. Interacts with HIF1AN. HIF1AN negatively regulates the function of notch intracellular domain (NICD), accelerating myogenic differentiation. Interacts (via NICD) with SNAI1 (via zinc fingers); the interaction induces SNAI1 degradation via MDM2-mediated ubiquitination and inhibits SNAI1-induced cell invasion. Interacts (via NICD) with MDM2A. Interacts (via NICD) with BCL6; the interaction decreases MAML1 recruitment by NOTCH1 NICD on target genes DNA and inhibits NOTCH1 transactivation activity. Interacts with THBS4. Interacts (via the EGF-like repeat region) with CCN3 (via CTCK domain). Interacts (via EGF-like domains) with DLL4 (via N-terminal DSL and MNNL domains). Interacts with ZMIZ1. Interacts (via NICD domain) with MEGF10 (via the cytoplasmic domain). Interacts with DLL1 and JAG1. Interacts (via NICD domain) with PRAG1. Forms a complex with PRAG1, N1ICD and MAML1, in a MAML1-dependent manner. Interacts (via transmembrane region) with PSEN1; the interaction is direct. Interacts with ZFP64. Synthesized in the endoplasmic reticulum as an inactive form which is proteolytically cleaved by a furin-like convertase in the trans-Golgi network before it reaches the plasma membrane to yield an active, ligand-accessible form. Cleavage results in a C-terminal fragment N(TM) and a N-terminal fragment N(EC). Following ligand binding, it is cleaved by ADAM17 to yield a membrane-associated intermediate fragment called notch extracellular truncation (NEXT). Following endocytosis, this fragment is then cleaved by one of the catalytic subunits of gamma-secretase (PSEN1 or PSEN2) to release a Notch-derived peptide containing the intracellular domain (NICD) from the membrane. Post-translationally, phosphorylated. In terms of processing, O-linked glycosylation by GALNT11 is involved in determination of left/right symmetry: glycosylation promotes activation of NOTCH1, possibly by promoting cleavage by ADAM17, modulating the balance between motile and immotile (sensory) cilia at the left-right organiser (LRO). O-glycosylated on the EGF-like domains. O-glucosylated at Ser-435 by KDELC1 and KDELC2. Contains both O-linked fucose and O-linked glucose in the EGF-like domains 11, 12 and 13, which are interacting with the residues on DLL4. O-glycosylation at Ser-1027 is only partial. MFNG-, RFNG- and LFNG-mediated modification of O-fucose residues at specific EGF-like domains results in inhibition of its activation by JAG1 and enhancement of its activation by DLL1 via an increased binding to DLL1. Ubiquitinated. Undergoes 'Lys-29'-linked polyubiquitination by ITCH; promotes the lysosomal degradation of non-activated internalized NOTCH1. Deubiquitination by USP12 is required for transport of internalized non-activated receptor from late endosomes to lysosomes for degradation. Monoubiquitination at Lys-1749 is required for activation by gamma-secretase cleavage, it promotes interaction with AAK1, which stabilizes it. Deubiquitination by EIF3F is necessary for nuclear import of activated Notch. Post-translationally, hydroxylated at Asn-1945 and Asn-2012 by HIF1AN. Hydroxylation reduces affinity for HI1AN and may thus indirectly modulate negative regulation of NICD. In terms of tissue distribution, highly expressed in the brain, lung and thymus. Expressed at lower levels in the spleen, bone-marrow, spinal cord, eyes, mammary gland, liver, intestine, skeletal muscle, kidney and heart. In the hair follicle, highly expressed exclusively in the epithelial compartment.

It localises to the cell membrane. Its subcellular location is the late endosome membrane. The protein localises to the nucleus. In terms of biological role, functions as a receptor for membrane-bound ligands Jagged-1 (JAG1), Jagged-2 (JAG2) and Delta-1 (DLL1) to regulate cell-fate determination. Upon ligand activation through the released notch intracellular domain (NICD) it forms a transcriptional activator complex with RBPJ/RBPSUH and activates genes of the enhancer of split locus. Affects the implementation of differentiation, proliferation and apoptotic programs. Involved in angiogenesis; negatively regulates endothelial cell proliferation and migration and angiogenic sprouting. Involved in the maturation of both CD4(+) and CD8(+) cells in the thymus. Important for follicular differentiation and possibly cell fate selection within the follicle. During cerebellar development, functions as a receptor for neuronal DNER and is involved in the differentiation of Bergmann glia. Represses neuronal and myogenic differentiation. May play an essential role in postimplantation development, probably in some aspect of cell specification and/or differentiation. May be involved in mesoderm development, somite formation and neurogenesis. May enhance HIF1A function by sequestering HIF1AN away from HIF1A. Required for the THBS4 function in regulating protective astrogenesis from the subventricular zone (SVZ) niche after injury. Involved in determination of left/right symmetry by modulating the balance between motile and immotile (sensory) cilia at the left-right organiser (LRO). This is Neurogenic locus notch homolog protein 1 (Notch1) from Mus musculus (Mouse).